The sequence spans 424 residues: Homeobox even-skipped homolog protein 2 (424 aa).

Disordered regions lie at residues 18–65 and 132–178; these read PAGK…DTPT and TTQL…GPDQ. Composition is skewed to polar residues over residues 50-65 and 132-145; these read RPTSASLHNTVGDTPT and TTQLKENTNKVYSD. The segment covering 146 to 175 has biased composition (low complexity); that stretch reads NGSSTNTSSNGSNITNLNGNSSSIGNSGSG. The homeobox DNA-binding region spans 179–238; it reads VRRYRTAFTREQIGRLEKEFYRENYVSRPRRCELAAALNLPETTIKVWFQNRRMKDKRQR.

It belongs to the even-skipped homeobox family.

It localises to the nucleus. The chain is Homeobox even-skipped homolog protein 2 (EVX2) from Heterodontus francisci (Horn shark).